The primary structure comprises 418 residues: MAP kinase-interacting serine/threonine-protein kinase 1 (418 aa).

Residues Met1–Arg23 form a disordered region. The Protein kinase domain maps to Arg37–Leu321. ATP is bound by residues Leu43–Val51 and Lys66. Asp158 serves as the catalytic Proton acceptor. The disordered stretch occupies residues Pro384–Pro418. The span at Arg389–Gly403 shows a compositional bias: basic residues. Polar residues predominate over residues Pro406 to Pro418.

It belongs to the protein kinase superfamily. CAMK Ser/Thr protein kinase family. Mg(2+) is required as a cofactor.

It carries out the reaction L-seryl-[protein] + ATP = O-phospho-L-seryl-[protein] + ADP + H(+). The catalysed reaction is L-threonyl-[protein] + ATP = O-phospho-L-threonyl-[protein] + ADP + H(+). Functionally, may play a role in the response to environmental stress and cytokines. Appears to regulate translation by phosphorylating EIF4E, thus increasing the affinity of this protein for the 7-methylguanosine-containing mRNA cap. This Xenopus laevis (African clawed frog) protein is MAP kinase-interacting serine/threonine-protein kinase 1 (mknk1).